The following is a 248-amino-acid chain: Aliphatic sulfonates import ATP-binding protein SsuB 2 (248 aa).

Residues V14–I230 enclose the ABC transporter domain. Residue G46–S53 participates in ATP binding.

This sequence belongs to the ABC transporter superfamily. Aliphatic sulfonates importer (TC 3.A.1.17.2) family. The complex is composed of two ATP-binding proteins (SsuB), two transmembrane proteins (SsuC) and a solute-binding protein (SsuA).

Its subcellular location is the cell inner membrane. It catalyses the reaction ATP + H2O + aliphatic sulfonate-[sulfonate-binding protein]Side 1 = ADP + phosphate + aliphatic sulfonateSide 2 + [sulfonate-binding protein]Side 1.. In terms of biological role, part of the ABC transporter complex SsuABC involved in aliphatic sulfonates import. Responsible for energy coupling to the transport system. This Mesorhizobium japonicum (strain LMG 29417 / CECT 9101 / MAFF 303099) (Mesorhizobium loti (strain MAFF 303099)) protein is Aliphatic sulfonates import ATP-binding protein SsuB 2.